The chain runs to 330 residues: (4-{4-[2-(gamma-L-glutamylamino)ethyl]phenoxymethyl}furan-2-yl)methanamine synthase (330 aa).

It belongs to the MfnF family.

It carries out the reaction gamma-L-glutamyltyramine + [5-(aminomethyl)furan-3-yl]methyl diphosphate = (4-{4-[2-(gamma-L-glutamylamino)ethyl]phenoxymethyl}furan-2-yl)methanamine + diphosphate. It participates in cofactor biosynthesis; methanofuran biosynthesis. Functionally, catalyzes the condensation between 5-(aminomethyl)-3-furanmethanol diphosphate (F1-PP) and gamma-glutamyltyramine to produce APMF-Glu. The sequence is that of (4-{4-[2-(gamma-L-glutamylamino)ethyl]phenoxymethyl}furan-2-yl)methanamine synthase from Methanocaldococcus jannaschii (strain ATCC 43067 / DSM 2661 / JAL-1 / JCM 10045 / NBRC 100440) (Methanococcus jannaschii).